The following is a 90-amino-acid chain: Small ribosomal subunit protein bS18 (90 aa).

The protein belongs to the bacterial ribosomal protein bS18 family. Part of the 30S ribosomal subunit. Forms a tight heterodimer with protein bS6.

In terms of biological role, binds as a heterodimer with protein bS6 to the central domain of the 16S rRNA, where it helps stabilize the platform of the 30S subunit. This chain is Small ribosomal subunit protein bS18, found in Porphyromonas gingivalis (strain ATCC 33277 / DSM 20709 / CIP 103683 / JCM 12257 / NCTC 11834 / 2561).